A 701-amino-acid chain; its full sequence is DC-STAMP domain-containing protein 2 (701 aa).

Transmembrane regions (helical) follow at residues 15–35 (TCGF…ELLG), 40–60 (PFGC…GMGF), 82–102 (LLLL…NTLQ), and 215–235 (FPHL…LASL). 2 N-linked (GlcNAc...) asparagine glycosylation sites follow: N272 and N284. 2 consecutive transmembrane segments (helical) span residues 310 to 330 (ALSL…IQAL) and 404 to 424 (LLIM…LDLA). N-linked (GlcNAc...) asparagine glycosylation occurs at N468. Residues 488 to 508 (YIVIGTMYGLCFFVTLFGSYV) form a helical membrane-spanning segment. Residues 673 to 701 (LQEALGTNLSDKSTSKPERAGNRNQDRKQ) are disordered. The span at 685-701 (STSKPERAGNRNQDRKQ) shows a compositional bias: basic and acidic residues.

As to quaternary structure, interacts with DCST1. As to expression, expressed in testis.

Its subcellular location is the cytoplasmic vesicle. It is found in the secretory vesicle. The protein localises to the acrosome membrane. Functionally, essential sperm cell-surface protein required for sperm-egg fusion and fertilization. The protein is DC-STAMP domain-containing protein 2 of Mus musculus (Mouse).